The following is a 60-amino-acid chain: Large ribosomal subunit protein bL33 (60 aa).

The protein belongs to the bacterial ribosomal protein bL33 family.

In Chlorobium chlorochromatii (strain CaD3), this protein is Large ribosomal subunit protein bL33.